Here is a 169-residue protein sequence, read N- to C-terminus: Chorismate pyruvate-lyase (169 aa).

Methionine 37, arginine 79, leucine 117, and glutamate 158 together coordinate substrate.

Belongs to the UbiC family. Monomer.

Its subcellular location is the cytoplasm. It carries out the reaction chorismate = 4-hydroxybenzoate + pyruvate. It functions in the pathway cofactor biosynthesis; ubiquinone biosynthesis. Functionally, removes the pyruvyl group from chorismate, with concomitant aromatization of the ring, to provide 4-hydroxybenzoate (4HB) for the ubiquinone pathway. The chain is Chorismate pyruvate-lyase from Proteus mirabilis (strain HI4320).